The sequence spans 477 residues: Pup--protein ligase (477 aa).

Residue E16 participates in Mg(2+) binding. R60 contributes to the ATP binding site. Residue Y62 coordinates Mg(2+). Catalysis depends on D64, which acts as the Proton acceptor. E70 serves as a coordination point for Mg(2+). ATP contacts are provided by T73 and W441.

It belongs to the Pup ligase/Pup deamidase family. Pup-conjugating enzyme subfamily.

It carries out the reaction ATP + [prokaryotic ubiquitin-like protein]-L-glutamate + [protein]-L-lysine = ADP + phosphate + N(6)-([prokaryotic ubiquitin-like protein]-gamma-L-glutamyl)-[protein]-L-lysine.. It functions in the pathway protein degradation; proteasomal Pup-dependent pathway. The protein operates within protein modification; protein pupylation. Functionally, catalyzes the covalent attachment of the prokaryotic ubiquitin-like protein modifier Pup to the proteasomal substrate proteins, thereby targeting them for proteasomal degradation. This tagging system is termed pupylation. The ligation reaction involves the side-chain carboxylate of the C-terminal glutamate of Pup and the side-chain amino group of a substrate lysine. The protein is Pup--protein ligase of Corynebacterium kroppenstedtii (strain DSM 44385 / JCM 11950 / CIP 105744 / CCUG 35717).